We begin with the raw amino-acid sequence, 113 residues long: Defense protein 2 (113 aa).

This sequence belongs to the attacin/sarcotoxin-2 family.

It localises to the secreted. In terms of biological role, has antibacterial activity against both Gram-positive and Gram-negative bacteria. The chain is Defense protein 2 from Lonomia obliqua (Moth).